The chain runs to 670 residues: uncharacterized protein (670 aa).

This is an uncharacterized protein from Ictalurid herpesvirus 1 (strain Auburn) (IcHV-1).